Here is a 356-residue protein sequence, read N- to C-terminus: Naringenin,2-oxoglutarate 3-dioxygenase (356 aa).

One can recognise a Fe2OG dioxygenase domain in the interval 188-292 (CVDMDQKVVV…RLSIATFQNP (105 aa)). Fe cation contacts are provided by histidine 215, aspartate 217, and histidine 273. Arginine 283 provides a ligand contact to 2-oxoglutarate.

Belongs to the iron/ascorbate-dependent oxidoreductase family. Requires Fe(2+) as cofactor. It depends on L-ascorbate as a cofactor.

It catalyses the reaction a (2S)-flavan-4-one + 2-oxoglutarate + O2 = a (2R,3R)-dihydroflavonol + succinate + CO2. It functions in the pathway secondary metabolite biosynthesis; flavonoid biosynthesis. Catalyzes the 3-beta-hydroxylation of 2S-flavanones to 2R,3R-dihydroflavonols which are intermediates in the biosynthesis of flavonols, anthocyanidins, catechins and proanthocyanidins in plants. The sequence is that of Naringenin,2-oxoglutarate 3-dioxygenase (FHT) from Callistephus chinensis (China aster).